Here is a 168-residue protein sequence, read N- to C-terminus: Cysteine-rich perinuclear theca protein 1 (168 aa).

The interval 144-168 (NVSDPEEVPPCLDSDPFPNGDLASS) is disordered.

In terms of tissue distribution, specifically expressed in spermatozoa (at protein level). Detected from the elongated spermatid stage onwards; not found in immature germ cells or somatic cells (at protein level).

Its subcellular location is the cytoplasm. It is found in the cytoskeleton. The protein resides in the perinuclear theca. The polypeptide is Cysteine-rich perinuclear theca protein 1 (Mus musculus (Mouse)).